A 282-amino-acid chain; its full sequence is Putative SLC9B1-like protein SLC9B1P1 (282 aa).

7 helical membrane passes run 27-47 (LLAITGFNTCLSIVFYSGGMI), 51-71 (IASLRNVCISLLAGIVLGFFV), 87-107 (GFLVLITFVSAVLGSQPIGLH), 135-155 (IITNVWDIFQPLLFGLVGAEV), 174-194 (LALCVRILNIYLLMCFAGFSF), 198-218 (IFIALAWMPKATVQAVLGPLA), and 239-259 (VAFLAIMITAPNGALLMGILG).

Belongs to the monovalent cation:proton antiporter 1 (CPA1) transporter (TC 2.A.36) family.

It is found in the membrane. The sequence is that of Putative SLC9B1-like protein SLC9B1P1 (SLC9B1P1) from Homo sapiens (Human).